Consider the following 721-residue polypeptide: Fatty acid oxidation complex subunit alpha (721 aa).

Positions M1–A190 are enoyl-CoA hydratase/isomerase. Residue D297 coordinates substrate. Residues K312–E721 form a 3-hydroxyacyl-CoA dehydrogenase region. Residues M325, D344, V401 to E403, K408, and S430 each bind NAD(+). H451 functions as the For 3-hydroxyacyl-CoA dehydrogenase activity in the catalytic mechanism. N454 is an NAD(+) binding site. N501 and Y660 together coordinate substrate.

It in the N-terminal section; belongs to the enoyl-CoA hydratase/isomerase family. In the C-terminal section; belongs to the 3-hydroxyacyl-CoA dehydrogenase family. Heterotetramer of two alpha chains (FadB) and two beta chains (FadA).

The catalysed reaction is a (3S)-3-hydroxyacyl-CoA + NAD(+) = a 3-oxoacyl-CoA + NADH + H(+). The enzyme catalyses a (3S)-3-hydroxyacyl-CoA = a (2E)-enoyl-CoA + H2O. It carries out the reaction a 4-saturated-(3S)-3-hydroxyacyl-CoA = a (3E)-enoyl-CoA + H2O. It catalyses the reaction (3S)-3-hydroxybutanoyl-CoA = (3R)-3-hydroxybutanoyl-CoA. The catalysed reaction is a (3Z)-enoyl-CoA = a 4-saturated (2E)-enoyl-CoA. The enzyme catalyses a (3E)-enoyl-CoA = a 4-saturated (2E)-enoyl-CoA. Its pathway is lipid metabolism; fatty acid beta-oxidation. Involved in the aerobic and anaerobic degradation of long-chain fatty acids via beta-oxidation cycle. Catalyzes the formation of 3-oxoacyl-CoA from enoyl-CoA via L-3-hydroxyacyl-CoA. It can also use D-3-hydroxyacyl-CoA and cis-3-enoyl-CoA as substrate. This is Fatty acid oxidation complex subunit alpha from Pseudomonas syringae pv. syringae (strain B728a).